Reading from the N-terminus, the 279-residue chain is Movement protein (279 aa).

This sequence belongs to the cucumovirus movement protein family.

The protein localises to the host cell junction. Its subcellular location is the host plasmodesma. In terms of biological role, transports viral genome to neighboring plant cells directly through plasmosdesmata, without any budding. The movement protein allows efficient cell to cell propagation, by bypassing the host cell wall barrier. Acts by forming a tubular structure at the host plasmodesmata, enlarging it enough to allow free passage of virion capsids. The polypeptide is Movement protein (Cucumber mosaic virus (strain M) (CMV)).